A 512-amino-acid polypeptide reads, in one-letter code: Amidase 2 (512 aa).

Residues Lys122 and Ser197 each act as charge relay system in the active site. Residues Ser197 and 218-221 contribute to the substrate site; that span reads IGGS. The active-site Acyl-ester intermediate is Ser221.

This sequence belongs to the amidase family.

The catalysed reaction is a monocarboxylic acid amide + H2O = a monocarboxylate + NH4(+). It functions in the pathway xenobiotic degradation. Functionally, amidase; part of the Fusarium detoxification of benzoxazolinone cluster 2 (FDB2) involved in the degradation of benzoxazolinones produced by the host plant. Maize, wheat, and rye produce the 2 benzoxazinone phytoanticipins 2,4-dihy-droxy-7-methoxy-1,4-benzoxazin-3-one (DIMBOA) and 2,4-dihydroxy-1,4-benzoxazin-3-one (DIBOA) that, due to their inherent instability once released, spontaneously degrade to the more stable corresponding benzoxazolinones, 6-methoxy-2-benzoxazolinone (MBOA) and 2-benzoxazolinone (BOA), respectively. The first step in the detoxification of benzoxazolinones involves the hydrolysis of the cyclic ester bond of benzoxazolinones by the FDB1 cluster gamma-lactamase MBL1 to aminophenols. MBL1 is able to convert BOA into 2-aminophenol (2-AP), as well as MBOA into 5-methoxy-2-aminophenol (2-AMP). The FDB2 cluster N-malonyltransferase FDB2/NAT1 then metabolizes aminophenols via N-malonylation to non-toxic malonamic acids. FDB2/NAT1 converts 2-AP into N-(2-hydroxyphenyl) malonamic acid (HPMA) and 2-AMP into N-(2-hydroxy-4-methoxyphenyl) malonamic acid (HMPMA). The duplicated dienlactone hydrolases DLH1 and DLH2 may provide redundant function for hydrolyzing the lactone moiety in the BOA molecule. The roles of the amidases an other enzymes encoded by the 2 FDB clusters have not been identified so far. The chain is Amidase 2 from Gibberella moniliformis (strain M3125 / FGSC 7600) (Maize ear and stalk rot fungus).